A 63-amino-acid polypeptide reads, in one-letter code: DNA-directed RNA polymerase 7 kDa subunit (63 aa).

Belongs to the poxviridae DNA-directed RNA polymerase 7 kDa subunit family. As to quaternary structure, the DNA-dependent RNA polymerase (vRNAP) consists of eight subunits encoded by early viral genes and termed according to their apparent molecular masses Rpo147, Rpo132, Rpo35, Rpo30, Rpo22, Rpo19, Rpo18, and Rpo7. The same holoenzyme, with the addition of the transcription-specificity factor RAP94, is used for early gene expression.

It is found in the virion. It catalyses the reaction RNA(n) + a ribonucleoside 5'-triphosphate = RNA(n+1) + diphosphate. Its function is as follows. Part of the DNA-dependent RNA polymerase which catalyzes the transcription of viral DNA into RNA using the four ribonucleoside triphosphates as substrates. Responsible for the transcription of early, intermediate and late genes. DNA-dependent RNA polymerase associates with the early transcription factor (ETF), itself composed of OPG118 and OPG134, thereby allowing the early genes transcription. Late transcription, and probably also intermediate transcription, require newly synthesized RNA polymerase. The chain is DNA-directed RNA polymerase 7 kDa subunit (OPG090) from Monkeypox virus.